The following is a 424-amino-acid chain: Histidine--tRNA ligase (424 aa).

This sequence belongs to the class-II aminoacyl-tRNA synthetase family. Homodimer.

It localises to the cytoplasm. It carries out the reaction tRNA(His) + L-histidine + ATP = L-histidyl-tRNA(His) + AMP + diphosphate + H(+). This chain is Histidine--tRNA ligase, found in Pectobacterium carotovorum subsp. carotovorum (strain PC1).